Reading from the N-terminus, the 270-residue chain is Orotidine 5'-phosphate decarboxylase (270 aa).

Substrate contacts are provided by residues D43, K65 to H67, D96 to T105, Y217, and R236. K98 serves as the catalytic Proton donor.

The protein belongs to the OMP decarboxylase family.

It carries out the reaction orotidine 5'-phosphate + H(+) = UMP + CO2. Its pathway is pyrimidine metabolism; UMP biosynthesis via de novo pathway; UMP from orotate: step 2/2. The chain is Orotidine 5'-phosphate decarboxylase (URA3) from Aureobasidium pullulans (Black yeast).